A 244-amino-acid polypeptide reads, in one-letter code: Mono-ADP-ribosyltransferase C3 (244 aa).

The N-terminal stretch at 1–40 (MKGIRKSILCLVLSAGVIAPVTTSIVQSPQKCYACTVDKG) is a signal peptide. The TR mART core domain maps to 44 to 244 (DTFTEFTNVE…QIMITAMIFK (201 aa)). NAD(+)-binding positions include threonine 80, asparagine 87, arginine 91, 128–131 (RGDD), and 167–169 (RTE). Arginine 128 is a catalytic residue. Residue serine 174 is part of the active site. Residues 182–185 (FGGR) and 211–213 (QLE) each bind NAD(+). Residue glutamate 213 is part of the active site.

The protein to exoenzymes 3 of C.limosum and C.botulinum D phage, and to S.aureus ediN. As to quaternary structure, monomer.

The protein localises to the secreted. It catalyses the reaction L-asparaginyl-[protein] + NAD(+) = N(4)-(ADP-D-ribosyl)-L-asparaginyl-[protein] + nicotinamide + H(+). Functionally, ADP-ribosylates eukaryotic Rho and Rac proteins on an asparagine residue. The protein is Mono-ADP-ribosyltransferase C3 of Clostridium botulinum C phage (Clostridium botulinum C bacteriophage).